The following is a 101-amino-acid chain: Small ribosomal subunit protein uS14 (101 aa).

It belongs to the universal ribosomal protein uS14 family. Part of the 30S ribosomal subunit. Contacts proteins S3 and S10.

Its function is as follows. Binds 16S rRNA, required for the assembly of 30S particles and may also be responsible for determining the conformation of the 16S rRNA at the A site. In Shewanella sediminis (strain HAW-EB3), this protein is Small ribosomal subunit protein uS14.